Consider the following 482-residue polypeptide: G2/mitotic-specific cyclin cdc13 (482 aa).

3 stretches are compositionally biased toward polar residues: residues 35 to 55 (LHSS…STNV), 78 to 92 (SKNT…SVST), and 118 to 140 (SVFN…SVST). Residues 35 to 140 (LHSSENSLVN…LSTKSHSVST (106 aa)) form a disordered region. The Cyclin N-terminal domain occupies 206-332 (DIFEYLNELE…ILRVLEFNLA (127 aa)).

Belongs to the cyclin family. Cyclin AB subfamily. In terms of assembly, interacts with cdc2. Interacts with rum1. Associates with microtubules. Also interacts with cdc11.

It localises to the nucleus. The protein resides in the cytoplasm. It is found in the cytoskeleton. Its subcellular location is the microtubule organizing center. The protein localises to the spindle pole body. Its function is as follows. Essential for the control of the cell cycle at the G2/M (mitosis) transition. Interacts with the cdc2 protein kinase to form MPF. G2/M cyclins accumulate steadily during G2 and are abruptly destroyed at mitosis. Involved in the reorganization of the cytoskeleton on transition from G2 to mitosis. Association with rum1 promotes its proteolysis during G1. Also essential for initiation of meiosis II. The polypeptide is G2/mitotic-specific cyclin cdc13 (Schizosaccharomyces pombe (strain 972 / ATCC 24843) (Fission yeast)).